The chain runs to 728 residues: 1,4-alpha-glucan branching enzyme GlgB (728 aa).

Residue Asp405 is the Nucleophile of the active site. Catalysis depends on Glu458, which acts as the Proton donor.

The protein belongs to the glycosyl hydrolase 13 family. GlgB subfamily. As to quaternary structure, monomer.

The catalysed reaction is Transfers a segment of a (1-&gt;4)-alpha-D-glucan chain to a primary hydroxy group in a similar glucan chain.. It functions in the pathway glycan biosynthesis; glycogen biosynthesis. Catalyzes the formation of the alpha-1,6-glucosidic linkages in glycogen by scission of a 1,4-alpha-linked oligosaccharide from growing alpha-1,4-glucan chains and the subsequent attachment of the oligosaccharide to the alpha-1,6 position. The protein is 1,4-alpha-glucan branching enzyme GlgB of Escherichia coli O1:K1 / APEC.